A 484-amino-acid polypeptide reads, in one-letter code: MTKSLLSLAVTAFILGGCSLIPDYQTPEAPVAAQWPQGPAYSPTQSADVAAAEQGWRQFFHDPALQQLIQTSLVNNRDLRVAALNLDAYRAQYRIQRADLFPAVSATGSGSRQRVPANMSQTGESGITSQYSATLGVSAYELDLFGRVRSLTEQALETYLSSEQARRSTQIALVASVANAYYTWQADQALFKLTEETLKTYEESYNLTRRSNEVGVASALDVSQARTAVEGARVKYSQYQRLVAQDVNSLTVLLGTGIPADLAKPLELDADQLAEVPAGLPSDILQRRPDIQEAEHLLKAANANIGAARAAFFPSISLTANAGSLSPDMGHLFAGGQGTWLFQPQINLPIFNAGSLKASLDYSKIQKDINVAKYEKTIQTAFQEVSDGLAARKTFEEQLQAQRDLVQANQDYYRLAERRYRIGIDSNLTFLDAQRNLFSAQQALIGDRLSQLTSEVNLYKALGGGWYEQTGQANQQASVETPKG.

A signal peptide spans 1–17 (MTKSLLSLAVTAFILGG). Cys-18 is lipidated: N-palmitoyl cysteine. Cys-18 carries the S-diacylglycerol cysteine lipid modification.

The protein belongs to the outer membrane factor (OMF) (TC 1.B.17) family.

It is found in the cell outer membrane. In terms of biological role, the outer membrane component of a constitutive organic solvent efflux system. Is involved in export of toluene, styrene, m-xylene, propylbenzene and ethylbenzene. Also exports AMP and the antibiotics carbenicillin, nalidixic acid, chloramphenicol and tetracycline. This chain is Toluene efflux pump outer membrane protein TtgC (ttgC), found in Pseudomonas putida (strain DOT-T1E).